A 2030-amino-acid polypeptide reads, in one-letter code: Dedicator of cytokinesis protein 3 (2030 aa).

Positions 6–67 (EEEKYGVVIC…PANYIHLKKA (62 aa)) constitute an SH3 domain. Residues 421–599 (RNDLYLTLEK…ESFFISTQLS (179 aa)) form the C2 DOCK-type domain. The DOCKER domain occupies 1228–1635 (KSEINKEEMY…LYHEFPGLDK (408 aa)). 4 disordered regions span residues 1641–1662 (SGTS…PESI), 1734–1771 (SSSQ…SLPD), 1849–1927 (DTPP…ADED), and 1951–2030 (QPCR…RGEQ). S1658 bears the Phosphoserine mark. The span at 1734–1754 (SSSQASPSSSSLSSTHSAPSQ) shows a compositional bias: low complexity. Residues 1755 to 1765 (MITSAPSSARG) are compositionally biased toward polar residues. The segment covering 1880-1902 (GSNSTLSGSASSGVSSLSESNFG) has biased composition (low complexity). Over residues 1967-1977 (PMDPPALPPKP) the composition is skewed to pro residues. Positions 1970–1976 (PPALPPK) match the SH3-binding motif. 2 stretches are compositionally biased toward basic and acidic residues: residues 1984–2001 (ALEH…ERPR) and 2014–2030 (AKEE…RGEQ).

The protein belongs to the DOCK family. As to quaternary structure, interacts with presenilin proteins PSEN1 and PSEN2. Interacts with CRK. As to expression, in normal brains, it is localized in the neuropil, and occasionally in the pyramidal cells, while in Alzheimer disease brains, it is associated with neurofibrillary tangles.

The protein localises to the cytoplasm. In terms of biological role, potential guanine nucleotide exchange factor (GEF). GEF proteins activate some small GTPases by exchanging bound GDP for free GTP. Its interaction with presenilin proteins as well as its ability to stimulate Tau/MAPT phosphorylation suggest that it may be involved in Alzheimer disease. Ectopic expression in nerve cells decreases the secretion of amyloid-beta APBA1 protein and lowers the rate of cell-substratum adhesion, suggesting that it may affect the function of some small GTPase involved in the regulation of actin cytoskeleton or cell adhesion receptors. This Homo sapiens (Human) protein is Dedicator of cytokinesis protein 3 (DOCK3).